The primary structure comprises 539 residues: Chaperonin GroEL (539 aa).

Residues 29-32, 86-90, G413, 476-478, and D492 each bind ATP; these read TLGP, DGTTT, and NAA.

Belongs to the chaperonin (HSP60) family. As to quaternary structure, forms a cylinder of 14 subunits composed of two heptameric rings stacked back-to-back. Interacts with the co-chaperonin GroES.

The protein resides in the cytoplasm. It carries out the reaction ATP + H2O + a folded polypeptide = ADP + phosphate + an unfolded polypeptide.. Functionally, together with its co-chaperonin GroES, plays an essential role in assisting protein folding. The GroEL-GroES system forms a nano-cage that allows encapsulation of the non-native substrate proteins and provides a physical environment optimized to promote and accelerate protein folding. The protein is Chaperonin GroEL of Geobacillus sp. (strain WCH70).